Here is a 589-residue protein sequence, read N- to C-terminus: DNA mismatch repair protein MutL (589 aa).

Disordered stretches follow at residues 330-355 (LQRREAPQRPEPARPYTTPPPSSHRE) and 374-394 (RIYEQPEPYRPPEPPAASEPT). Basic and acidic residues predominate over residues 331–341 (QRREAPQRPEP). Positions 381-390 (PYRPPEPPAA) are enriched in pro residues.

The protein belongs to the DNA mismatch repair MutL/HexB family.

Functionally, this protein is involved in the repair of mismatches in DNA. It is required for dam-dependent methyl-directed DNA mismatch repair. May act as a 'molecular matchmaker', a protein that promotes the formation of a stable complex between two or more DNA-binding proteins in an ATP-dependent manner without itself being part of a final effector complex. The polypeptide is DNA mismatch repair protein MutL (Trichlorobacter lovleyi (strain ATCC BAA-1151 / DSM 17278 / SZ) (Geobacter lovleyi)).